Reading from the N-terminus, the 66-residue chain is Small ribosomal subunit protein bS21 (66 aa).

It belongs to the bacterial ribosomal protein bS21 family.

This chain is Small ribosomal subunit protein bS21, found in Solidesulfovibrio magneticus (strain ATCC 700980 / DSM 13731 / RS-1) (Desulfovibrio magneticus).